The following is a 698-amino-acid chain: Elongation factor G (698 aa).

The tr-type G domain maps to A10–L285. GTP contacts are provided by residues A19–T26, D83–H87, and N137–D140.

This sequence belongs to the TRAFAC class translation factor GTPase superfamily. Classic translation factor GTPase family. EF-G/EF-2 subfamily.

The protein localises to the cytoplasm. Its function is as follows. Catalyzes the GTP-dependent ribosomal translocation step during translation elongation. During this step, the ribosome changes from the pre-translocational (PRE) to the post-translocational (POST) state as the newly formed A-site-bound peptidyl-tRNA and P-site-bound deacylated tRNA move to the P and E sites, respectively. Catalyzes the coordinated movement of the two tRNA molecules, the mRNA and conformational changes in the ribosome. In Frankia alni (strain DSM 45986 / CECT 9034 / ACN14a), this protein is Elongation factor G.